Consider the following 773-residue polypeptide: Probable serine/threonine-protein kinase MARK-C (773 aa).

Polar residues predominate over residues 1 to 27 (MESNKSSSHGDVSTSPSFLNNHHQFNN). The segment at 1 to 32 (MESNKSSSHGDVSTSPSFLNNHHQFNNGGDII) is disordered. One can recognise a Protein kinase domain in the interval 46-300 (YEVGKTLGNG…IQELKNHPWT (255 aa)). Residues 52–60 (LGNGTFGKV) and Lys75 contribute to the ATP site. The Proton acceptor role is filled by Asp171. Positions 362–390 (RYASKEVENLKSKLELLSKRKKSFSDKRN) form a coiled coil. Disordered stretches follow at residues 382-445 (KKSF…SQGS), 462-487 (DNDIENSDNNKSSSLTRRSSDPNKDI), and 558-588 (YSIQQQQLQQQQQQQQEQHKEDNNKPNTNLR). Positions 405–443 (DLSSNNNNNQQQQNSPPSKTNSSSTSSSNRESNNNSPSQ) are enriched in low complexity. Positions 445–474 (SIKEISLDELDNHIEQLDNDIENSDNNKSS) form a coiled coil. The segment covering 468–478 (SDNNKSSSLTR) has biased composition (polar residues). The segment covering 561 to 573 (QQQQLQQQQQQQQ) has biased composition (low complexity). A KA1 domain is found at 724–773 (CFDEDNSVKFQIEIVKICNLDLTGIQLKRLSGDTWKYKDICTELVESMKL).

This sequence belongs to the protein kinase superfamily. CAMK Ser/Thr protein kinase family. SNF1 subfamily.

It carries out the reaction L-seryl-[protein] + ATP = O-phospho-L-seryl-[protein] + ADP + H(+). The catalysed reaction is L-threonyl-[protein] + ATP = O-phospho-L-threonyl-[protein] + ADP + H(+). The protein is Probable serine/threonine-protein kinase MARK-C (mrkC) of Dictyostelium discoideum (Social amoeba).